Reading from the N-terminus, the 274-residue chain is NADH-ubiquinone oxidoreductase chain 2 (274 aa).

The next 8 membrane-spanning stretches (helical) occupy residues 28-48 (MIIMSALLLKSGAAPFHFWFP), 54-74 (LTWMNALMLMTWQKIAPLMLI), 79-99 (IKYLLLISVILSVIIGAIGGL), 107-127 (LMAFSSINHLGWMLSSLMFSE), 128-148 (SIWLIYFFFYSFLSFVLTFMF), 171-191 (FTLFMNFLSLGGLPPFLGFLP), 206-226 (FLLTLMMMSTLITLFFYLRIC), and 254-274 (LIMTFFSIFGLFMISLFYFMF).

The protein belongs to the complex I subunit 2 family.

It is found in the mitochondrion inner membrane. The catalysed reaction is a ubiquinone + NADH + 5 H(+)(in) = a ubiquinol + NAD(+) + 4 H(+)(out). Core subunit of the mitochondrial membrane respiratory chain NADH dehydrogenase (Complex I) that is believed to belong to the minimal assembly required for catalysis. Complex I functions in the transfer of electrons from NADH to the respiratory chain. The immediate electron acceptor for the enzyme is believed to be ubiquinone. The sequence is that of NADH-ubiquinone oxidoreductase chain 2 (mt:ND2) from Drosophila sechellia (Fruit fly).